A 446-amino-acid chain; its full sequence is Na(+)-translocating NADH-quinone reductase subunit A (446 aa).

This sequence belongs to the NqrA family. Composed of six subunits; NqrA, NqrB, NqrC, NqrD, NqrE and NqrF.

It carries out the reaction a ubiquinone + n Na(+)(in) + NADH + H(+) = a ubiquinol + n Na(+)(out) + NAD(+). Its function is as follows. NQR complex catalyzes the reduction of ubiquinone-1 to ubiquinol by two successive reactions, coupled with the transport of Na(+) ions from the cytoplasm to the periplasm. NqrA to NqrE are probably involved in the second step, the conversion of ubisemiquinone to ubiquinol. This chain is Na(+)-translocating NADH-quinone reductase subunit A, found in Aliivibrio salmonicida (strain LFI1238) (Vibrio salmonicida (strain LFI1238)).